Reading from the N-terminus, the 319-residue chain is Malate dehydrogenase (319 aa).

Residues 10–15 (GSGNIG) and aspartate 34 contribute to the NAD(+) site. Residues arginine 83 and arginine 89 each contribute to the substrate site. NAD(+)-binding positions include asparagine 96 and 119 to 121 (ITN). Substrate-binding residues include asparagine 121 and arginine 152. Histidine 176 (proton acceptor) is an active-site residue.

This sequence belongs to the LDH/MDH superfamily. MDH type 3 family.

It carries out the reaction (S)-malate + NAD(+) = oxaloacetate + NADH + H(+). Functionally, catalyzes the reversible oxidation of malate to oxaloacetate. The polypeptide is Malate dehydrogenase (Paramagnetospirillum magneticum (strain ATCC 700264 / AMB-1) (Magnetospirillum magneticum)).